Reading from the N-terminus, the 420-residue chain is Meiotically up-regulated gene 137 protein (420 aa).

Residues 10-232 form the BAR domain; the sequence is NEKPLGDQRA…QNSLTPQKKI (223 aa). One can recognise an SH3 domain in the interval 279-345; it reads KETVFVKAIY…PVNYCTRIYD (67 aa). The segment at 398 to 420 is disordered; that stretch reads SQNVEASSQPIKIRKPLPEIPNK.

The protein localises to the cytoplasm. Its subcellular location is the nucleus. Its function is as follows. Has a role in meiosis and sporulation. The sequence is that of Meiotically up-regulated gene 137 protein (mug137) from Schizosaccharomyces pombe (strain 972 / ATCC 24843) (Fission yeast).